The following is an 861-amino-acid chain: 1,4-alpha-glucan-branching enzyme (861 aa).

(1,4-alpha-D-glucosyl)n is bound by residues Trp-173 and Lys-208. Residue Asp-429 is the Nucleophile of the active site. Catalysis depends on Glu-484, which acts as the Proton donor.

It belongs to the glycosyl hydrolase 13 family. GlgB subfamily. In terms of assembly, monomer.

It is found in the plastid. The protein resides in the chloroplast. It localises to the amyloplast. The catalysed reaction is Transfers a segment of a (1-&gt;4)-alpha-D-glucan chain to a primary hydroxy group in a similar glucan chain.. The protein operates within glycan biosynthesis; starch biosynthesis. Catalyzes the formation of the alpha-1,6-glucosidic linkages in starch by scission of a 1,4-alpha-linked oligosaccharide from growing alpha-1,4-glucan chains and the subsequent attachment of the oligosaccharide to the alpha-1,6 position. The sequence is that of 1,4-alpha-glucan-branching enzyme (SBE1) from Solanum tuberosum (Potato).